A 467-amino-acid chain; its full sequence is Methylenetetrahydrofolate--tRNA-(uracil-5-)-methyltransferase TrmFO (467 aa).

10–15 (GAGLAG) contributes to the FAD binding site.

This sequence belongs to the MnmG family. TrmFO subfamily. It depends on FAD as a cofactor.

It localises to the cytoplasm. It carries out the reaction uridine(54) in tRNA + (6R)-5,10-methylene-5,6,7,8-tetrahydrofolate + NADH + H(+) = 5-methyluridine(54) in tRNA + (6S)-5,6,7,8-tetrahydrofolate + NAD(+). It catalyses the reaction uridine(54) in tRNA + (6R)-5,10-methylene-5,6,7,8-tetrahydrofolate + NADPH + H(+) = 5-methyluridine(54) in tRNA + (6S)-5,6,7,8-tetrahydrofolate + NADP(+). Its function is as follows. Catalyzes the folate-dependent formation of 5-methyl-uridine at position 54 (M-5-U54) in all tRNAs. This is Methylenetetrahydrofolate--tRNA-(uracil-5-)-methyltransferase TrmFO from Prochlorococcus marinus (strain MIT 9515).